Reading from the N-terminus, the 359-residue chain is Phospho-N-acetylmuramoyl-pentapeptide-transferase (359 aa).

A run of 10 helical transmembrane segments spans residues 21–41, 73–93, 98–118, 143–163, 166–186, 202–222, 237–257, 261–281, 286–306, and 336–356; these read YITF…FLLG, TMGG…WADL, IWVT…DDYL, GICL…VPFF, VAPD…VGTS, PLVI…NAII, VTVF…FNAY, IFMG…VAII, ILLT…IFQV, and KIIV…VSTL.

This sequence belongs to the glycosyltransferase 4 family. MraY subfamily. The cofactor is Mg(2+).

It localises to the cell inner membrane. It catalyses the reaction UDP-N-acetyl-alpha-D-muramoyl-L-alanyl-gamma-D-glutamyl-meso-2,6-diaminopimeloyl-D-alanyl-D-alanine + di-trans,octa-cis-undecaprenyl phosphate = di-trans,octa-cis-undecaprenyl diphospho-N-acetyl-alpha-D-muramoyl-L-alanyl-D-glutamyl-meso-2,6-diaminopimeloyl-D-alanyl-D-alanine + UMP. Its pathway is cell wall biogenesis; peptidoglycan biosynthesis. In terms of biological role, catalyzes the initial step of the lipid cycle reactions in the biosynthesis of the cell wall peptidoglycan: transfers peptidoglycan precursor phospho-MurNAc-pentapeptide from UDP-MurNAc-pentapeptide onto the lipid carrier undecaprenyl phosphate, yielding undecaprenyl-pyrophosphoryl-MurNAc-pentapeptide, known as lipid I. This Desulfosudis oleivorans (strain DSM 6200 / JCM 39069 / Hxd3) (Desulfococcus oleovorans) protein is Phospho-N-acetylmuramoyl-pentapeptide-transferase.